The following is a 1399-amino-acid chain: MKDLLNLLKNQGQVEEFDAIRIGLASPEMIRSWSFGEVKKPETINYRTFKPERDGLFCAKIFGPVKDYECLCGKYKRLKHRGVICEKCGVEVALAKVRRERMAHIELASPVAHIWFLKSLPSRIGLLMDMTLRDIERVLYFESYVVIDPGMTTLEKGQLLNDEQYFEALEEFGDDFDARMGAEAVRELLHAIDLEHEIGRLREEIPQTNSETKIKKLSKRLKLMEAFQGSGNLPEWMVLTVLPVLPPDLRPLVPLDGGRFATSDLNDLYRRVINRNNRLKRLLDLSAPDIIVRNEKRMLQEAVDALLDNGRRGRAITGSNKRPLKSLADMIKGKQGRFRQNLLGKRVDYSGRSVITVGPTLRLHQCGLPKKMALELFKPFIFGKLEMRGLATTIKAAKKMVERELPEVWDVLAEVIREHPVLLNRAPTLHRLGIQAFEPVLIEGKAIQLHPLVCAAYNADFDGDQMAVHVPLTLEAQLEARALMMSTNNILSPANGEPIIVPSQDVVLGLYYMTREAINAKGEGRVFADLQEVDRVFRAGEAALHAKIKVRISETVNDRDGGSVSATRIVDTTVGRALLFQVVPKGLSFDVVNLPMKKKAISKLINQCYRVVGLKETVIFADQLMYTGFAYSTISGVSIGVNDFVIPDEKARIIGAATDEVKEIESQYASGLVTQGEKYNKVIDLWSKANDEVSKAMMANLSKEKVIDRNGDEVEQESFNSMYMMADSGARGSAAQIRQLAGMRGLMAKPDGSIIETPITANFREGLSVLQYFISTHGARKGLADTALKTANSGYLTRRLVDVAQDLVVTEIDCGTEHGLLMTPHIEGGDVVEPLGERVLGRVIARDVFKPGTEDVIVPAGTLVDEKWVEFIELNSIDEVIVRSPISCETRYGICAKCYGRDLARGHQVNIGEAVGVIAAQSIGEPGTQLTMRTFHIGGAASRTSAADSVQVKNGGTVRLHNLKHVERVDGHLVAVSRSGELAIADDFGRERERYKLPYGAVISVKEGDKVDAGAIVAKWDPHTHPIVTEMKGTVTYVGMEEGITIKRQTDELTGMTNIEVLDVKDRPAAGKDIRPAVKMVGMDGKDLLLPGTDVPAQYFLPANALVGVADGAQIAIGDVIARIPQETSKTRDITGGLPRVADLFEARRPKEASILAEVSGTIAFGKETKGKRRLVITPNDGSDPYEELIPKWRHLNVFEGEQVNRGEVISDGPSDPHDILRLLGVSALAKYIVNEIQDVYRLQGVKINDKHIETILRQMLRKVEIAESGDSSFIKGDQMELTHVLVENERLSTEDKFVAKFTRVLLGITKASLSTESFISAASFQETTRVLTEAAVTGKRDYLRGLKENVVVGRLIPAGTGLAYHSERKRRRDADKPLRVSASEVEAALTEALNSSGN.

The Zn(2+) site is built by C70, C72, C85, and C88. Mg(2+) is bound by residues D460, D462, and D464. 4 residues coordinate Zn(2+): C814, C888, C895, and C898.

It belongs to the RNA polymerase beta' chain family. In terms of assembly, the RNAP catalytic core consists of 2 alpha, 1 beta, 1 beta' and 1 omega subunit. When a sigma factor is associated with the core the holoenzyme is formed, which can initiate transcription. Requires Mg(2+) as cofactor. The cofactor is Zn(2+).

The catalysed reaction is RNA(n) + a ribonucleoside 5'-triphosphate = RNA(n+1) + diphosphate. Its function is as follows. DNA-dependent RNA polymerase catalyzes the transcription of DNA into RNA using the four ribonucleoside triphosphates as substrates. The protein is DNA-directed RNA polymerase subunit beta' of Pseudomonas fluorescens (strain ATCC BAA-477 / NRRL B-23932 / Pf-5).